The sequence spans 291 residues: N-acetylmannosamine kinase (291 aa).

Residues Ala-5–Lys-12 and Gly-132–Ser-139 each bind ATP. Positions 156, 166, 168, and 173 each coordinate Zn(2+).

The protein belongs to the ROK (NagC/XylR) family. NanK subfamily. Homodimer.

The catalysed reaction is an N-acyl-D-mannosamine + ATP = an N-acyl-D-mannosamine 6-phosphate + ADP + H(+). It functions in the pathway amino-sugar metabolism; N-acetylneuraminate degradation; D-fructose 6-phosphate from N-acetylneuraminate: step 2/5. In terms of biological role, catalyzes the phosphorylation of N-acetylmannosamine (ManNAc) to ManNAc-6-P. The chain is N-acetylmannosamine kinase from Escherichia coli (strain SE11).